We begin with the raw amino-acid sequence, 649 residues long: Acetyl-coenzyme A synthetase (649 aa).

CoA-binding positions include 189–192 (RGGK), T311, and N335. ATP is bound by residues 387–389 (GEP), 411–416 (DTWWQT), D500, and R515. S523 lines the CoA pocket. Position 526 (R526) interacts with ATP. V537, H539, and V542 together coordinate Mg(2+). R584 contacts CoA. N6-acetyllysine is present on K609.

Belongs to the ATP-dependent AMP-binding enzyme family. Requires Mg(2+) as cofactor. Post-translationally, acetylated. Deacetylation by the SIR2-homolog deacetylase activates the enzyme.

It carries out the reaction acetate + ATP + CoA = acetyl-CoA + AMP + diphosphate. Catalyzes the conversion of acetate into acetyl-CoA (AcCoA), an essential intermediate at the junction of anabolic and catabolic pathways. AcsA undergoes a two-step reaction. In the first half reaction, AcsA combines acetate with ATP to form acetyl-adenylate (AcAMP) intermediate. In the second half reaction, it can then transfer the acetyl group from AcAMP to the sulfhydryl group of CoA, forming the product AcCoA. In Sinorhizobium fredii (strain NBRC 101917 / NGR234), this protein is Acetyl-coenzyme A synthetase.